Here is a 427-residue protein sequence, read N- to C-terminus: C4-dicarboxylate TRAP transporter large permease protein DctM (427 aa).

The next 13 membrane-spanning stretches (helical) occupy residues 2–22 (TILFLFLLLFLLMFIGVPIAV), 55–75 (TLLAIPFFLLSGAFMTTGGVA), 91–111 (GGLAIAAVLACMLFAALSGSS), 115–135 (VAAVGSIAIAGMVRSGYPQAF), 138–158 (GIVCNAGTLGILIPPSIVMVV), 171–191 (FIAGVVPGLLLGLILMVVIYI), 216–236 (ALWGLLLMVIILGGIYSGAFT), 237–257 (PTEAAAVAAVYSAFVALFVYR), 274–294 (LTIMLMFIIANAMLFAHVLTT), 310–330 (LSPWMFLLVVNIVLLIAGNFM), 335–355 (IILILAPIFFPIAMELGIDPI), 359–379 (IIMVVNMEIGLITPPVGLNLF), and 396–416 (ALPWLMILLVFLIIVTYIPAV).

Belongs to the TRAP transporter large permease family. The complex comprises the extracytoplasmic solute receptor protein DctP, and the two transmembrane proteins DctQ and DctM.

The protein localises to the cell inner membrane. In terms of biological role, part of the tripartite ATP-independent periplasmic (TRAP) transport system DctPQM involved in C4-dicarboxylates uptake. This chain is C4-dicarboxylate TRAP transporter large permease protein DctM, found in Pseudomonas aeruginosa (strain ATCC 15692 / DSM 22644 / CIP 104116 / JCM 14847 / LMG 12228 / 1C / PRS 101 / PAO1).